Here is a 115-residue protein sequence, read N- to C-terminus: MANHFRVDRVGMEIKREVNEILQKKVRDPRVQGVTITDVQMLGDLSMAKVYYTIMSDLASDNQKAQLGLEKATGTIKRELGHNLKMYKIPDLTFVKDQSIEYGNKIDQMLRDLDK.

Belongs to the RbfA family. In terms of assembly, monomer. Binds 30S ribosomal subunits, but not 50S ribosomal subunits or 70S ribosomes.

It localises to the cytoplasm. In terms of biological role, one of several proteins that assist in the late maturation steps of the functional core of the 30S ribosomal subunit. Associates with free 30S ribosomal subunits (but not with 30S subunits that are part of 70S ribosomes or polysomes). Required for efficient processing of 16S rRNA. May interact with the 5'-terminal helix region of 16S rRNA. This chain is Ribosome-binding factor A, found in Streptococcus gordonii (strain Challis / ATCC 35105 / BCRC 15272 / CH1 / DL1 / V288).